The following is a 300-amino-acid chain: UPF0282 protein TON_1363 (300 aa).

It belongs to the UPF0282 family.

This Thermococcus onnurineus (strain NA1) protein is UPF0282 protein TON_1363.